The following is a 119-amino-acid chain: Large ribosomal subunit protein uL18 (119 aa).

This sequence belongs to the universal ribosomal protein uL18 family. Part of the 50S ribosomal subunit; part of the 5S rRNA/L5/L18/L25 subcomplex. Contacts the 5S and 23S rRNAs.

Functionally, this is one of the proteins that bind and probably mediate the attachment of the 5S RNA into the large ribosomal subunit, where it forms part of the central protuberance. The polypeptide is Large ribosomal subunit protein uL18 (Clostridium beijerinckii (strain ATCC 51743 / NCIMB 8052) (Clostridium acetobutylicum)).